The chain runs to 671 residues: Zinc finger protein 568 (671 aa).

The disordered stretch occupies residues 1 to 31 (MERLSQMAGRRAWCAEDSVPRQEEEDRTRPS). The segment covering 18–29 (SVPRQEEEDRTR) has biased composition (basic and acidic residues). KRAB domains lie at 34 to 105 (VTFK…RRSP) and 124 to 195 (LRFE…IWHP). Residues 214-366 (EKMAKKHTCP…QGSERPHKCK (153 aa)) form a disordered region. Basic and acidic residues-rich tracts occupy residues 226-251 (EDSK…EGHL), 296-312 (IERE…EHAQ), and 329-341 (RPQE…ERKK). 11 consecutive C2H2-type zinc fingers follow at residues 363-385 (HKCK…QKLH), 391-413 (YKCQ…HRVH), 419-441 (FECK…QRIH), 447-469 (HKCK…LLTH), 475-497 (FECK…QMSH), 503-525 (HKCK…QSVH), 531-553 (YKCK…QRAH), 559-581 (YKCK…QKVH), 587-609 (HKCK…ERSH), 615-637 (YECK…QKIH), and 643-665 (YKCQ…QRIH).

The protein belongs to the krueppel C2H2-type zinc-finger protein family. As to quaternary structure, interacts with TRIM28. In terms of tissue distribution, little or no expression detected in most adult tissues (brain, liver, kidney, spleen, testis, ovary). In the hippocampus, detected in neural stem cells within the subventricular zone and subgranular zone.

It is found in the nucleus. In terms of biological role, has transcriptional repression activity, partially through the recruitment of the corepressor TRIM28 but also has repression activity independently of this interaction. Essential during embryonic development, where it acts as direct repressor of IGF2-P0, placental-specific transcript of IGF2, in early development and regulates convergent extension movements required for axis elongation and tissue morphogenesis in all germ layers. Also important for normal morphogenesis of extraembryonic tissues including the yolk sac, extraembryonic mesoderm and placenta. May enhance proliferation or maintenance of neural stem cells. The chain is Zinc finger protein 568 from Mus musculus (Mouse).